Here is a 95-residue protein sequence, read N- to C-terminus: Aspartyl/glutamyl-tRNA(Asn/Gln) amidotransferase subunit C (95 aa).

This sequence belongs to the GatC family. As to quaternary structure, heterotrimer of A, B and C subunits.

It carries out the reaction L-glutamyl-tRNA(Gln) + L-glutamine + ATP + H2O = L-glutaminyl-tRNA(Gln) + L-glutamate + ADP + phosphate + H(+). The catalysed reaction is L-aspartyl-tRNA(Asn) + L-glutamine + ATP + H2O = L-asparaginyl-tRNA(Asn) + L-glutamate + ADP + phosphate + 2 H(+). In terms of biological role, allows the formation of correctly charged Asn-tRNA(Asn) or Gln-tRNA(Gln) through the transamidation of misacylated Asp-tRNA(Asn) or Glu-tRNA(Gln) in organisms which lack either or both of asparaginyl-tRNA or glutaminyl-tRNA synthetases. The reaction takes place in the presence of glutamine and ATP through an activated phospho-Asp-tRNA(Asn) or phospho-Glu-tRNA(Gln). This chain is Aspartyl/glutamyl-tRNA(Asn/Gln) amidotransferase subunit C, found in Rhodopseudomonas palustris (strain BisB18).